A 140-amino-acid chain; its full sequence is Lysozyme D (140 aa).

The signal sequence occupies residues methionine 1–glycine 18. Residues arginine 19–phenylalanine 140 form the C-type lysozyme domain. 4 cysteine pairs are disulfide-bonded: cysteine 24–cysteine 139, cysteine 45–cysteine 129, cysteine 80–cysteine 96, and cysteine 92–cysteine 110. Residues glutamate 50 and aspartate 68 contribute to the active site.

Belongs to the glycosyl hydrolase 22 family. In terms of tissue distribution, found in the midgut.

The catalysed reaction is Hydrolysis of (1-&gt;4)-beta-linkages between N-acetylmuramic acid and N-acetyl-D-glucosamine residues in a peptidoglycan and between N-acetyl-D-glucosamine residues in chitodextrins.. Its function is as follows. Unlikely to play an active role in the humoral immune defense. May have a function in the digestion of bacteria in the food. The sequence is that of Lysozyme D (LysD) from Drosophila melanogaster (Fruit fly).